The primary structure comprises 640 residues: 2-hydroxyacyl-CoA lyase 2 (640 aa).

The chain crosses the membrane as a helical span at residues Val2–Val22. Thiamine diphosphate is bound at residue Glu102. A thiamine pyrophosphate binding region spans residues Asp477–Cys557. The Mg(2+) site is built by Asp528 and Asn554.

This sequence belongs to the TPP enzyme family. Mg(2+) serves as cofactor. Requires thiamine diphosphate as cofactor.

The protein resides in the endoplasmic reticulum membrane. It catalyses the reaction 2-hydroxyoctadecanoyl-CoA = heptadecanal + formyl-CoA. The enzyme catalyses (2R)-hydroxyhexadecanoyl-CoA = pentadecanal + formyl-CoA. Functionally, endoplasmic reticulum 2-OH acyl-CoA lyase involved in the cleavage (C1 removal) reaction in the fatty acid alpha-oxydation in a thiamine pyrophosphate (TPP)-dependent manner. The sequence is that of 2-hydroxyacyl-CoA lyase 2 from Caenorhabditis elegans.